The chain runs to 273 residues: Phycobilisome 32.1 kDa linker polypeptide, phycocyanin-associated, rod 2 (273 aa).

In terms of domain architecture, PBS-linker spans 1–180 (MTSLVSAQRL…VYRGYATSDR (180 aa)). Positions 220-273 (NQMYRLQVIQGAAPGRGTRVRRGKAEYLVSYDNLSAKLQQINRQGDTVTMISLA) constitute a CpcD-like domain.

The protein belongs to the phycobilisome linker protein family. As to quaternary structure, part of 2 PBS rod complexes, the conventional CpcG-PBS rod and a photosystem I-specific CpcL-PBS rod, both of which include ferredoxin--NADP reductase (petH). CpcG-PBS has on average 3 stacked phycocyanin hexamers (PC, CpcA and CpcB). Linker CpcG connects the PC stack to the thylakoid, the hexamers are linked by 1 copy of CpcC1, 1 copy of CpcC2 and the stack is terminated by a single copy of CpcD. The CpcL-PBS has on average 5 stacked phycocyanin hexamers (PC, CpcA and CpcB). Linker CpcL connects the PC stack to the thylakoid, the hexamers are linked by 1 copy of CpcC1, 3 copies of CpcC2 and the stack is terminated by a single copy of CpcD. Interacts with the C-phycocyanin (PC) beta subunit (cpcB), it may fit into the center of the PC hexamer.

It is found in the cellular thylakoid membrane. Rod linker protein, associated with phycocyanin. Linker polypeptides determine the state of aggregation and the location of the disk-shaped phycobiliprotein units within the phycobilisome and modulate their spectroscopic properties in order to mediate a directed and optimal energy transfer. This is Phycobilisome 32.1 kDa linker polypeptide, phycocyanin-associated, rod 2 (cpcC2) from Synechocystis sp. (strain ATCC 27184 / PCC 6803 / Kazusa).